A 322-amino-acid chain; its full sequence is MRILFAGTPSCAVPALNLIAREFDLCGVLTNPPAPAGRNKKMQDSDTALAVKELIKEGVLPENFPILTPQKLDDNYRKELEALKSELLVCFAYGKIFGPKTMALFPLGGINIHPSLLPRWRGPAPVPAAILAGDKLTGITIQTLAQKTDCGSILGQLEIPLNDSETTESLLADCADKCCPLLRDVLSDFENKLKQARPQEEAKALYCSMLKKEDGLIDWSKPAEEIERKIRAFTPWPGCFTFKNSEKISIIEANLYEDASNEMTKNKKFGTILGTDKKCGILIQTGNGILAVSVLQKQAKKKLEWKDFLNGSPDFLEGGFET.

Residue 115-118 (SLLP) participates in (6S)-5,6,7,8-tetrahydrofolate binding.

It belongs to the Fmt family.

The catalysed reaction is L-methionyl-tRNA(fMet) + (6R)-10-formyltetrahydrofolate = N-formyl-L-methionyl-tRNA(fMet) + (6S)-5,6,7,8-tetrahydrofolate + H(+). Its function is as follows. Attaches a formyl group to the free amino group of methionyl-tRNA(fMet). The formyl group appears to play a dual role in the initiator identity of N-formylmethionyl-tRNA by promoting its recognition by IF2 and preventing the misappropriation of this tRNA by the elongation apparatus. This Treponema denticola (strain ATCC 35405 / DSM 14222 / CIP 103919 / JCM 8153 / KCTC 15104) protein is Methionyl-tRNA formyltransferase.